Here is a 134-residue protein sequence, read N- to C-terminus: Large ribosomal subunit protein uL16c (134 aa).

Residues 1-17 (MLSPKRTRFRKQHRGRM) show a composition bias toward basic residues. The tract at residues 1–22 (MLSPKRTRFRKQHRGRMKGISS) is disordered.

The protein belongs to the universal ribosomal protein uL16 family. In terms of assembly, part of the 50S ribosomal subunit.

It is found in the plastid. It localises to the chloroplast. The polypeptide is Large ribosomal subunit protein uL16c (Solanum tuberosum (Potato)).